The chain runs to 345 residues: Holliday junction branch migration complex subunit RuvB (345 aa).

Positions 1–183 are large ATPase domain (RuvB-L); the sequence is MTTQRLVSAA…FGIVHRLEFY (183 aa). ATP-binding positions include isoleucine 22, arginine 23, glycine 64, lysine 67, threonine 68, threonine 69, 130–132, arginine 173, tyrosine 183, and arginine 220; that span reads EDY. Position 68 (threonine 68) interacts with Mg(2+). A small ATPAse domain (RuvB-S) region spans residues 184 to 254; sequence SVEELSRIVA…VAGKALEMLD (71 aa). The segment at 257-345 is head domain (RuvB-H); that stretch reads PNGFDQSDRR…NVNEELFGDE (89 aa). DNA contacts are provided by arginine 293, arginine 312, and arginine 317.

Belongs to the RuvB family. As to quaternary structure, homohexamer. Forms an RuvA(8)-RuvB(12)-Holliday junction (HJ) complex. HJ DNA is sandwiched between 2 RuvA tetramers; dsDNA enters through RuvA and exits via RuvB. An RuvB hexamer assembles on each DNA strand where it exits the tetramer. Each RuvB hexamer is contacted by two RuvA subunits (via domain III) on 2 adjacent RuvB subunits; this complex drives branch migration. In the full resolvosome a probable DNA-RuvA(4)-RuvB(12)-RuvC(2) complex forms which resolves the HJ.

It is found in the cytoplasm. The enzyme catalyses ATP + H2O = ADP + phosphate + H(+). In terms of biological role, the RuvA-RuvB-RuvC complex processes Holliday junction (HJ) DNA during genetic recombination and DNA repair, while the RuvA-RuvB complex plays an important role in the rescue of blocked DNA replication forks via replication fork reversal (RFR). RuvA specifically binds to HJ cruciform DNA, conferring on it an open structure. The RuvB hexamer acts as an ATP-dependent pump, pulling dsDNA into and through the RuvAB complex. RuvB forms 2 homohexamers on either side of HJ DNA bound by 1 or 2 RuvA tetramers; 4 subunits per hexamer contact DNA at a time. Coordinated motions by a converter formed by DNA-disengaged RuvB subunits stimulates ATP hydrolysis and nucleotide exchange. Immobilization of the converter enables RuvB to convert the ATP-contained energy into a lever motion, pulling 2 nucleotides of DNA out of the RuvA tetramer per ATP hydrolyzed, thus driving DNA branch migration. The RuvB motors rotate together with the DNA substrate, which together with the progressing nucleotide cycle form the mechanistic basis for DNA recombination by continuous HJ branch migration. Branch migration allows RuvC to scan DNA until it finds its consensus sequence, where it cleaves and resolves cruciform DNA. The protein is Holliday junction branch migration complex subunit RuvB of Methylococcus capsulatus (strain ATCC 33009 / NCIMB 11132 / Bath).